Consider the following 454-residue polypeptide: N-myc 2 proto-oncogene protein (454 aa).

3 disordered regions span residues 133-166 (EKMQHGHEPAATGPATQVPGAGAASTAGRGHSGT), 231-270 (AAPPGLSSRPPNGGDHKVLSTSGEDALSDEVDEEEDEEEE), and 326-374 (SPYV…VRRR). Residues 256–270 (ALSDEVDEEEDEEEE) are compositionally biased toward acidic residues. Over residues 363–374 (RKSDSEDSVRRR) the composition is skewed to basic and acidic residues. Residues 371-423 (VRRRNHNILERQRRNDLRSSFTTLRDHVPELVKNEKAAKVVILKKACEYVHYL) enclose the bHLH domain. The segment at 423–444 (LQAKEHQLLMEKEKLQARQQQL) is leucine-zipper.

Efficient DNA binding requires dimerization with another bHLH protein.

The protein localises to the nucleus. The chain is N-myc 2 proto-oncogene protein (N-MYC2) from Otospermophilus beecheyi (California ground squirrel).